Reading from the N-terminus, the 459-residue chain is tRNA modification GTPase MnmE (459 aa).

Residues Arg-21, Glu-84, and Lys-123 each coordinate (6S)-5-formyl-5,6,7,8-tetrahydrofolate. A TrmE-type G domain is found at 219–380 (GMLTVIVGQP…LEKEIKQRVY (162 aa)). Position 229 (Asn-229) interacts with K(+). GTP-binding positions include 229–234 (NVGKSS), 248–254 (TDIPGTT), and 273–276 (DTAG). A Mg(2+)-binding site is contributed by Ser-233. K(+) is bound by residues Thr-248, Ile-250, and Thr-253. Thr-254 is a Mg(2+) binding site. Lys-459 is a (6S)-5-formyl-5,6,7,8-tetrahydrofolate binding site.

Belongs to the TRAFAC class TrmE-Era-EngA-EngB-Septin-like GTPase superfamily. TrmE GTPase family. As to quaternary structure, homodimer. Heterotetramer of two MnmE and two MnmG subunits. The cofactor is K(+).

It is found in the cytoplasm. Exhibits a very high intrinsic GTPase hydrolysis rate. Involved in the addition of a carboxymethylaminomethyl (cmnm) group at the wobble position (U34) of certain tRNAs, forming tRNA-cmnm(5)s(2)U34. The polypeptide is tRNA modification GTPase MnmE (Desulfitobacterium hafniense (strain Y51)).